The sequence spans 118 residues: MICOS complex subunit MIC13 (118 aa).

Residues 1-7 lie on the Mitochondrial matrix side of the membrane; it reads MVARVWS. The helical transmembrane segment at 8–26 threads the bilayer; it reads LMRFLIKGSVAGGAVYLVY. At 27 to 118 the chain is on the mitochondrial intermembrane side; that stretch reads DQELLGPSDK…GWEYVKARTK (92 aa).

It belongs to the MICOS complex subunit Mic13 family. As to quaternary structure, component of the mitochondrial contact site and cristae organizing system (MICOS) complex, composed of at least MICOS10/MIC10, CHCHD3/MIC19, CHCHD6/MIC25, APOO/MIC26, MICOS13/MIC13, APOOL/MIC27 and IMMT/MIC60. The complex associates with mitochondrial outer membrane proteins SAMM50, MTX1 and MTX2, and with HSPA9.

The protein localises to the mitochondrion inner membrane. Its function is as follows. Component of the MICOS complex, a large protein complex of the mitochondrial inner membrane that plays crucial roles in the maintenance of crista junctions, inner membrane architecture, and formation of contact sites to the outer membrane. Constituent of mature MICOS complex, it is required for the formation of cristae junction (CJ) and maintenance of cristae morphology. Required for the incorporation of MICOS10/MIC10 into the MICOS complex. The sequence is that of MICOS complex subunit MIC13 from Macaca fascicularis (Crab-eating macaque).